Reading from the N-terminus, the 96-residue chain is Integration host factor subunit beta (96 aa).

It belongs to the bacterial histone-like protein family. Heterodimer of an alpha and a beta chain.

In terms of biological role, this protein is one of the two subunits of integration host factor, a specific DNA-binding protein that functions in genetic recombination as well as in transcriptional and translational control. The chain is Integration host factor subunit beta from Caulobacter vibrioides (strain ATCC 19089 / CIP 103742 / CB 15) (Caulobacter crescentus).